A 467-amino-acid polypeptide reads, in one-letter code: Methylenetetrahydrofolate--tRNA-(uracil-5-)-methyltransferase TrmFO (467 aa).

G11 to G16 provides a ligand contact to FAD.

Belongs to the MnmG family. TrmFO subfamily. Requires FAD as cofactor.

Its subcellular location is the cytoplasm. The catalysed reaction is uridine(54) in tRNA + (6R)-5,10-methylene-5,6,7,8-tetrahydrofolate + NADH + H(+) = 5-methyluridine(54) in tRNA + (6S)-5,6,7,8-tetrahydrofolate + NAD(+). It catalyses the reaction uridine(54) in tRNA + (6R)-5,10-methylene-5,6,7,8-tetrahydrofolate + NADPH + H(+) = 5-methyluridine(54) in tRNA + (6S)-5,6,7,8-tetrahydrofolate + NADP(+). In terms of biological role, catalyzes the folate-dependent formation of 5-methyl-uridine at position 54 (M-5-U54) in all tRNAs. The sequence is that of Methylenetetrahydrofolate--tRNA-(uracil-5-)-methyltransferase TrmFO from Prochlorococcus marinus (strain NATL2A).